The chain runs to 506 residues: 2-isopropylmalate synthase (506 aa).

One can recognise a Pyruvate carboxyltransferase domain in the interval 4 to 266 (ILFMDTTLRD…EPSITLKEIK (263 aa)). Mn(2+) is bound by residues aspartate 13, histidine 201, histidine 203, and asparagine 237. Residues 390–506 (NITQLQVHFV…KLKSFIQLVK (117 aa)) are regulatory domain.

This sequence belongs to the alpha-IPM synthase/homocitrate synthase family. LeuA type 1 subfamily. Homodimer. Mn(2+) is required as a cofactor.

Its subcellular location is the cytoplasm. It carries out the reaction 3-methyl-2-oxobutanoate + acetyl-CoA + H2O = (2S)-2-isopropylmalate + CoA + H(+). The protein operates within amino-acid biosynthesis; L-leucine biosynthesis; L-leucine from 3-methyl-2-oxobutanoate: step 1/4. Catalyzes the condensation of the acetyl group of acetyl-CoA with 3-methyl-2-oxobutanoate (2-ketoisovalerate) to form 3-carboxy-3-hydroxy-4-methylpentanoate (2-isopropylmalate). The polypeptide is 2-isopropylmalate synthase (Bacillus thuringiensis subsp. konkukian (strain 97-27)).